Consider the following 400-residue polypeptide: MGLFTVVFTAIAALSAVDAAELLRSPNSKDIVPNSYLVVMKDSVSSADLDSHVSWVTDLHSESITKPGVKNLDGFKHSYKINGWHAYSGSFDSETLASILDNDQVDFVEHDRYVYIDGLVTQKDAPSWGLGRVSHRMNGTRDYVYDETAGSGITFYGVDTGIDIRHPDFGGRAVWGTNVVSGTGDNDRHGHGTHTAATATGTKYGLAKKANVVAVKALNDHGAGLWSNIMKALEWCVDDARKKNALGKAVLNLSISGGKVVAANQAITNAANAGIFVSVAAGNDNQDATNKSPASAENVCCAAASTIRDEKASISNYGSVVKLYAPGQGITSATPNNSTGVMTGTSMAAPHVGGVGATLMASKHIAPSAVCAELIKMATGAVRNPGANTTNKLLYNGSGQ.

A signal peptide spans 1 to 19 (MGLFTVVFTAIAALSAVDA). The propeptide occupies 20-117 (AELLRSPNSK…VEHDRYVYID (98 aa)). An Inhibitor I9 domain is found at 35-116 (SYLVVMKDSV…FVEHDRYVYI (82 aa)). The 274-residue stretch at 127–400 (SWGLGRVSHR…NKLLYNGSGQ (274 aa)) folds into the Peptidase S8 domain. N138 carries an N-linked (GlcNAc...) asparagine glycan. Residues D159 and H191 each act as charge relay system in the active site. N-linked (GlcNAc...) asparagine glycans are attached at residues N252, N336, and N337. Catalysis depends on S346, which acts as the Charge relay system. N-linked (GlcNAc...) asparagine glycosylation is found at N388 and N396.

Belongs to the peptidase S8 family.

The protein localises to the secreted. Its function is as follows. Secreted subtilisin-like serine protease with keratinolytic activity that contributes to pathogenicity. This chain is Subtilisin-like protease 11 (SUB11), found in Arthroderma gypseum (strain ATCC MYA-4604 / CBS 118893) (Microsporum gypseum).